Here is a 569-residue protein sequence, read N- to C-terminus: Interleukin-1 receptor type 1 (569 aa).

The N-terminal stretch at 1 to 17 is a signal peptide; the sequence is MKVLLRLICFIALLISS. Topologically, residues 18–336 are extracellular; that stretch reads LEADKCKERE…LIYPVTNFQK (319 aa). 4 disulfides stabilise this stretch: Cys23-Cys104, Cys44-Cys96, Cys121-Cys164, and Cys142-Cys196. 3 Ig-like C2-type domains span residues 23-110, 118-210, and 226-328; these read CKER…IKIS, PNLC…YPIT, and PVIV…IQLI. N-linked (GlcNAc...) asparagine glycosylation is present at Asn100. 5 N-linked (GlcNAc...) asparagine glycosylation sites follow: Asn193, Asn233, Asn249, Asn263, and Asn297. Cys248 and Cys312 are oxidised to a cystine. A helical transmembrane segment spans residues 337-356; that stretch reads HMIGICVTLTVIIVCSVFIY. At 357–569 the chain is on the cytoplasmic side; it reads KIFKIDIVLW…LQREAHVPLG (213 aa). One can recognise a TIR domain in the interval 383–538; that stretch reads KTYDAYILYP…RFWKNVRYHM (156 aa). The active site involves Glu470. Tyr496 carries the post-translational modification Phosphotyrosine. The disordered stretch occupies residues 540 to 569; that stretch reads VQRRSPSSKHQLLSPATKEKLQREAHVPLG. Residues 556-569 show a composition bias toward basic and acidic residues; the sequence is TKEKLQREAHVPLG.

Belongs to the interleukin-1 receptor family. The interleukin-1 receptor complex is a heterodimer of IL1R1 and IL1RAP. Interacts with PIK3R1. Interacts with IL1A. In terms of processing, a soluble form (sIL1R1) is probably produced by proteolytic cleavage at the cell surface (shedding). Post-translationally, rapidly phosphorylated on Tyr-496 in response to IL-1, which creates a SH2 binding site for the PI 3-kinase regulatory subunit PIK3R1. Expressed in T-helper cell subsets. Preferentially expressed in T-helper 1 (Th1) cells.

It localises to the membrane. It is found in the cell membrane. The protein resides in the secreted. The catalysed reaction is NAD(+) + H2O = ADP-D-ribose + nicotinamide + H(+). Its function is as follows. Receptor for IL1A, IL1B and IL1RN. After binding to interleukin-1 associates with the coreceptor IL1RAP to form the high affinity interleukin-1 receptor complex which mediates interleukin-1-dependent activation of NF-kappa-B, MAPK and other pathways. Signaling involves the recruitment of adapter molecules such as TOLLIP, MYD88, and IRAK1 or IRAK2 via the respective TIR domains of the receptor/coreceptor subunits. Binds ligands with comparable affinity and binding of antagonist IL1RN prevents association with IL1RAP to form a signaling complex. Involved in IL1B-mediated costimulation of IFNG production from T-helper 1 (Th1) cells. The chain is Interleukin-1 receptor type 1 (IL1R1) from Homo sapiens (Human).